Consider the following 72-residue polypeptide: DNA gyrase inhibitor YacG (72 aa).

Zn(2+) is bound by residues Cys-17, Cys-20, Cys-32, and Cys-36. Residues Pro-52–Arg-72 are disordered.

This sequence belongs to the DNA gyrase inhibitor YacG family. Interacts with GyrB. Zn(2+) is required as a cofactor.

Inhibits all the catalytic activities of DNA gyrase by preventing its interaction with DNA. Acts by binding directly to the C-terminal domain of GyrB, which probably disrupts DNA binding by the gyrase. The chain is DNA gyrase inhibitor YacG from Methylorubrum extorquens (strain CM4 / NCIMB 13688) (Methylobacterium extorquens).